The following is a 191-amino-acid chain: Holliday junction branch migration complex subunit RuvA (191 aa).

Residues 1 to 64 (MIGKLTGTLL…EDAQLLYGFA (64 aa)) form a domain I region. The domain II stretch occupies residues 65–140 (TAPERQAFRA…KLGADLGASH (76 aa)). The tract at residues 140 to 142 (HGP) is flexible linker. The tract at residues 143 to 191 (AVSGAQADILQALLALGYNDKEAAAALKALPAQVEVSDGIKWALKALTK) is domain III.

This sequence belongs to the RuvA family. In terms of assembly, homotetramer. Forms an RuvA(8)-RuvB(12)-Holliday junction (HJ) complex. HJ DNA is sandwiched between 2 RuvA tetramers; dsDNA enters through RuvA and exits via RuvB. An RuvB hexamer assembles on each DNA strand where it exits the tetramer. Each RuvB hexamer is contacted by two RuvA subunits (via domain III) on 2 adjacent RuvB subunits; this complex drives branch migration. In the full resolvosome a probable DNA-RuvA(4)-RuvB(12)-RuvC(2) complex forms which resolves the HJ.

The protein localises to the cytoplasm. Its function is as follows. The RuvA-RuvB-RuvC complex processes Holliday junction (HJ) DNA during genetic recombination and DNA repair, while the RuvA-RuvB complex plays an important role in the rescue of blocked DNA replication forks via replication fork reversal (RFR). RuvA specifically binds to HJ cruciform DNA, conferring on it an open structure. The RuvB hexamer acts as an ATP-dependent pump, pulling dsDNA into and through the RuvAB complex. HJ branch migration allows RuvC to scan DNA until it finds its consensus sequence, where it cleaves and resolves the cruciform DNA. The polypeptide is Holliday junction branch migration complex subunit RuvA (Verminephrobacter eiseniae (strain EF01-2)).